Here is a 270-residue protein sequence, read N- to C-terminus: Transmembrane protein 176B (270 aa).

4 helical membrane passes run 65 to 85, 95 to 115, 127 to 147, and 209 to 229; these read LALG…GVCL, ASGC…GAIV, VSSL…VLCV, and LFLA…GVGL. 4 positions are modified to phosphoserine: Ser236, Ser245, Ser254, and Ser258. The tract at residues 237–270 is disordered; the sequence is SQPLNEEGSEKRLLGENSVPPSPSREQTSTAIVL. Residues 260 to 270 show a composition bias toward polar residues; it reads SREQTSTAIVL.

Belongs to the TMEM176 family.

Its subcellular location is the nucleus membrane. May play a role in the process of maturation of dendritic cells. Required for the development of cerebellar granule cells. This is Transmembrane protein 176B (TMEM176B) from Pongo abelii (Sumatran orangutan).